Consider the following 194-residue polypeptide: Transmembrane protein 212 (194 aa).

Transmembrane regions (helical) follow at residues 11–31, 44–64, 76–96, 99–119, and 148–168; these read ILVT…FPVF, IACP…LLLA, ATFT…AIAL, ALLG…NYLG, and LQAL…TVFI.

It is found in the membrane. This Homo sapiens (Human) protein is Transmembrane protein 212 (TMEM212).